The following is a 452-amino-acid chain: Retinoid-inducible serine carboxypeptidase (452 aa).

The signal sequence occupies residues 1–28; that stretch reads MELSRRICLVRLWLLLLSFLLGFSAGSA. N-linked (GlcNAc...) asparagine glycosylation is found at asparagine 64, asparagine 102, and asparagine 126. Serine 167 is an active-site residue. Residues asparagine 192 and asparagine 362 are each glycosylated (N-linked (GlcNAc...) asparagine). Residues aspartate 371 and histidine 431 contribute to the active site.

This sequence belongs to the peptidase S10 family. In terms of tissue distribution, highly expressed in aorta, bladder, and kidney with much lower levels in all other tissues analyzed. Expression in kidney is restricted to proximal convoluted tubules.

The protein localises to the secreted. In terms of biological role, may be involved in vascular wall and kidney homeostasis. The chain is Retinoid-inducible serine carboxypeptidase (Scpep1) from Rattus norvegicus (Rat).